Here is a 317-residue protein sequence, read N- to C-terminus: Phospholipase A1 1 (317 aa).

An N-terminal signal peptide occupies residues 1 to 7 (RLIMFVG). A propeptide spanning residues 8–17 (DPSSSNELDR) is cleaved from the precursor. The cysteines at positions 21 and 104 are disulfide-linked. A glycan (N-linked (GlcNAc...) asparagine) is linked at asparagine 25. Serine 154 serves as the catalytic Nucleophile. Residue aspartate 182 is the Charge relay system of the active site. The cysteines at positions 193 and 198 are disulfide-linked. Asparagine 229 is a glycosylation site (N-linked (GlcNAc...) asparagine). Cysteine 236 and cysteine 244 are disulfide-bonded. The active-site Charge relay system is the histidine 246. Disulfide bonds link cysteine 261–cysteine 285, cysteine 262–cysteine 310, and cysteine 278–cysteine 283.

This sequence belongs to the AB hydrolase superfamily. Lipase family. As to expression, expressed by the venom gland.

It is found in the secreted. The catalysed reaction is a 1,2-diacyl-sn-glycero-3-phosphocholine + H2O = a 2-acyl-sn-glycero-3-phosphocholine + a fatty acid + H(+). In terms of biological role, catalyzes the hydrolysis of phosphatidylcholine with phospholipase A1 activity. May act as an allergen and induce hemolytic activity. The polypeptide is Phospholipase A1 1 (Dolichovespula maculata (Bald-faced hornet)).